Here is a 284-residue protein sequence, read N- to C-terminus: Bifunctional protein FolD (284 aa).

NADP(+) contacts are provided by residues Gly165–Ser167 and Ser190.

The protein belongs to the tetrahydrofolate dehydrogenase/cyclohydrolase family. As to quaternary structure, homodimer.

The enzyme catalyses (6R)-5,10-methylene-5,6,7,8-tetrahydrofolate + NADP(+) = (6R)-5,10-methenyltetrahydrofolate + NADPH. The catalysed reaction is (6R)-5,10-methenyltetrahydrofolate + H2O = (6R)-10-formyltetrahydrofolate + H(+). Its pathway is one-carbon metabolism; tetrahydrofolate interconversion. Its function is as follows. Catalyzes the oxidation of 5,10-methylenetetrahydrofolate to 5,10-methenyltetrahydrofolate and then the hydrolysis of 5,10-methenyltetrahydrofolate to 10-formyltetrahydrofolate. This Streptococcus uberis (strain ATCC BAA-854 / 0140J) protein is Bifunctional protein FolD.